The primary structure comprises 282 residues: Short-chain dehydrogenase/reductase prx7 (282 aa).

Residues asparagine 23, asparagine 70, tyrosine 150, lysine 154, valine 183, and threonine 185 each coordinate NADP(+). Catalysis depends on tyrosine 150, which acts as the Proton acceptor. The Lowers pKa of active site Tyr role is filled by lysine 154.

This sequence belongs to the short-chain dehydrogenases/reductases (SDR) family.

Its pathway is sesquiterpene biosynthesis. Functionally, short-chain dehydrogenase/reductase; part of the gene cluster that mediates the biosynthesis of PR-toxin, a bicyclic sesquiterpene belonging to the eremophilane class and acting as a mycotoxin. The first step of the pathway is catalyzed by the aristolochene synthase which performs the cyclization of trans,trans-farnesyl diphosphate (FPP) to the bicyclic sesquiterpene aristolochene. Following the formation of aristolochene, the non-oxygenated aristolochene is converted to the trioxygenated intermediate eremofortin B, via 7-epi-neopetasone. This conversion appears to involve three enzymes, a hydroxysterol oxidase-like enzyme, the quinone-oxidase prx3 that forms the quinone-type-structure in the bicyclic nucleus of aristolochene with the C8-oxo group and the C-3 hydroxyl group, and the P450 monooxygenase prx9 that introduces the epoxide at the double bond between carbons 1 and 2. No monoxy or dioxy-intermediates have been reported to be released to the broth, so these three early oxidative reactions may be coupled together. Eremofortin B is further oxidized by another P450 monooxygenase, that introduces a second epoxide between carbons 7 and 11 prior to acetylation to eremofortin A by the acetyltransferase prx11. The second epoxidation may be performed by a second P450 monooxygenase. After the acetylation step, eremofortin A is converted to eremofortin C and then to PR-toxin. First the conversion of eremofortin A to eremofortin C proceeds by oxidation of the side chain of the molecule at C-12 and is catalyzed by the short-chain oxidoreductase prx1. The cytochrome P450 monooxygenase prx8 also plays a role in this step. The primary alcohol formed at C-12 is finally oxidized by the short-chain alcohol dehydrogenase prx4 that forms PR-toxin. This Penicillium rubens (strain ATCC 28089 / DSM 1075 / NRRL 1951 / Wisconsin 54-1255) (Penicillium chrysogenum) protein is Short-chain dehydrogenase/reductase prx7.